The chain runs to 200 residues: Inner membrane-spanning protein YciB (200 aa).

5 consecutive transmembrane segments (helical) span residues 32-52 (FVAT…SYVV), 56-76 (VPLM…LTLV), 93-113 (LFAV…AILF), 126-146 (FLTI…EVIW), and 153-173 (FWVA…AMTQ).

It belongs to the YciB family.

Its subcellular location is the cell inner membrane. Functionally, plays a role in cell envelope biogenesis, maintenance of cell envelope integrity and membrane homeostasis. The protein is Inner membrane-spanning protein YciB of Afipia carboxidovorans (strain ATCC 49405 / DSM 1227 / KCTC 32145 / OM5) (Oligotropha carboxidovorans).